A 511-amino-acid chain; its full sequence is UDP-N-acetylmuramate--L-alanine ligase (511 aa).

Position 127 to 133 (127 to 133) interacts with ATP; the sequence is GTHGKTT. Residues 481 to 511 are disordered; that stretch reads VGTVPGGEVGGATTIGGTVPGGSAPGASAAG. Residues 484 to 504 show a composition bias toward gly residues; that stretch reads VPGGEVGGATTIGGTVPGGSA.

This sequence belongs to the MurCDEF family.

Its subcellular location is the cytoplasm. It catalyses the reaction UDP-N-acetyl-alpha-D-muramate + L-alanine + ATP = UDP-N-acetyl-alpha-D-muramoyl-L-alanine + ADP + phosphate + H(+). The protein operates within cell wall biogenesis; peptidoglycan biosynthesis. Its function is as follows. Cell wall formation. The chain is UDP-N-acetylmuramate--L-alanine ligase from Salinispora arenicola (strain CNS-205).